Consider the following 289-residue polypeptide: Eukaryotic translation initiation factor 3 subunit F (289 aa).

The MPN domain maps to 7–137 (VKVHPVVLFQ…LRAYVCVPLG (131 aa)).

This sequence belongs to the eIF-3 subunit F family. Component of the eukaryotic translation initiation factor 3 (eIF-3) complex.

Its subcellular location is the cytoplasm. In terms of biological role, component of the eukaryotic translation initiation factor 3 (eIF-3) complex, which is involved in protein synthesis of a specialized repertoire of mRNAs and, together with other initiation factors, stimulates binding of mRNA and methionyl-tRNAi to the 40S ribosome. The eIF-3 complex specifically targets and initiates translation of a subset of mRNAs involved in cell proliferation. The polypeptide is Eukaryotic translation initiation factor 3 subunit F (Bombyx mori (Silk moth)).